The chain runs to 455 residues: Bifunctional protein GlmU (455 aa).

Residues 1-227 (MKLKAIILAA…YEEIMAVNSR (227 aa)) are pyrophosphorylase. UDP-N-acetyl-alpha-D-glucosamine is bound by residues 8 to 11 (LAAG), Lys22, Gln72, and 77 to 78 (GT). Asp100 contributes to the Mg(2+) binding site. UDP-N-acetyl-alpha-D-glucosamine-binding residues include Gly137, Glu152, Asn167, and Asn225. Position 225 (Asn225) interacts with Mg(2+). The segment at 228–248 (EQLADVEAIMRRRIAKKHMAN) is linker. Residues 249–455 (GVTIMNPEHV…WTKRKGLLKK (207 aa)) form an N-acetyltransferase region. Positions 330 and 348 each coordinate UDP-N-acetyl-alpha-D-glucosamine. The active-site Proton acceptor is the His360. Tyr363 and Asn374 together coordinate UDP-N-acetyl-alpha-D-glucosamine. Acetyl-CoA contacts are provided by residues 383–384 (NY), Ser402, Cys420, and Arg437.

In the N-terminal section; belongs to the N-acetylglucosamine-1-phosphate uridyltransferase family. It in the C-terminal section; belongs to the transferase hexapeptide repeat family. Homotrimer. Mg(2+) is required as a cofactor.

Its subcellular location is the cytoplasm. It catalyses the reaction alpha-D-glucosamine 1-phosphate + acetyl-CoA = N-acetyl-alpha-D-glucosamine 1-phosphate + CoA + H(+). The catalysed reaction is N-acetyl-alpha-D-glucosamine 1-phosphate + UTP + H(+) = UDP-N-acetyl-alpha-D-glucosamine + diphosphate. Its pathway is nucleotide-sugar biosynthesis; UDP-N-acetyl-alpha-D-glucosamine biosynthesis; N-acetyl-alpha-D-glucosamine 1-phosphate from alpha-D-glucosamine 6-phosphate (route II): step 2/2. The protein operates within nucleotide-sugar biosynthesis; UDP-N-acetyl-alpha-D-glucosamine biosynthesis; UDP-N-acetyl-alpha-D-glucosamine from N-acetyl-alpha-D-glucosamine 1-phosphate: step 1/1. It functions in the pathway bacterial outer membrane biogenesis; LPS lipid A biosynthesis. In terms of biological role, catalyzes the last two sequential reactions in the de novo biosynthetic pathway for UDP-N-acetylglucosamine (UDP-GlcNAc). The C-terminal domain catalyzes the transfer of acetyl group from acetyl coenzyme A to glucosamine-1-phosphate (GlcN-1-P) to produce N-acetylglucosamine-1-phosphate (GlcNAc-1-P), which is converted into UDP-GlcNAc by the transfer of uridine 5-monophosphate (from uridine 5-triphosphate), a reaction catalyzed by the N-terminal domain. This is Bifunctional protein GlmU from Alkaliphilus oremlandii (strain OhILAs) (Clostridium oremlandii (strain OhILAs)).